We begin with the raw amino-acid sequence, 598 residues long: Dihydroxy-acid dehydratase astD, mitochondrial (598 aa).

The N-terminal 111 residues, 1 to 111 (MFASRIRSRA…HRAGLVPMRF (111 aa)), are a transit peptide targeting the mitochondrion. The tract at residues 23 to 50 (RLPASTTGRRYKSDETLNRVSSKITQPK) is disordered. A compositionally biased stretch (polar residues) spans 40–50 (NRVSSKITQPK). [2Fe-2S] cluster is bound at residue Cys-86. Asp-118 is a Mg(2+) binding site. Cys-159 contributes to the [2Fe-2S] cluster binding site. Residue Asp-160 participates in Mg(2+) binding. Cys-232 provides a ligand contact to [2Fe-2S] cluster. Glu-485 is a Mg(2+) binding site. The active-site Proton acceptor is the Ser-511.

The protein belongs to the IlvD/Edd family. The cofactor is [2Fe-2S] cluster. Requires Mg(2+) as cofactor.

The protein localises to the mitochondrion. The catalysed reaction is (2R)-2,3-dihydroxy-3-methylbutanoate = 3-methyl-2-oxobutanoate + H2O. It catalyses the reaction (2R,3R)-2,3-dihydroxy-3-methylpentanoate = (S)-3-methyl-2-oxopentanoate + H2O. The protein operates within amino-acid biosynthesis; L-isoleucine biosynthesis; L-isoleucine from 2-oxobutanoate: step 3/4. It participates in amino-acid biosynthesis; L-valine biosynthesis; L-valine from pyruvate: step 3/4. Its activity is regulated as follows. DHAD activity is not inhibited by the dihydroxyacid dehydratase inhibitor aspterric acid (AA). In terms of biological role, dihydroxyacid dehydratase; part of the gene cluster that mediates the biosynthesis of the sesquiterpenoid aspterric acid (AA), an inhibitor of dihydroxy-acid dehydratase (DHAD) effective as an herbicide. Performs the third step in the common pathway leading to biosynthesis of branched-chain amino acids. Catalyzes the dehydration of (2R,3R)-2,3-dihydroxy-3-methylpentanoate (2,3-dihydroxy-3-methylvalerate) into 2-oxo-3-methylpentanoate (2-oxo-3-methylvalerate) and of (2R)-2,3-dihydroxy-3-methylbutanoate (2,3-dihydroxyisovalerate) into 2-oxo-3-methylbutanoate (2-oxoisovalerate), the penultimate precursor to L-isoleucine and L-valine, respectively. AstD confers self-resistance in the presence of the dihydroxyacid dehydratase inhibitor aspterric acid (AA) produced by the ast cluster. This Aspergillus terreus (strain NIH 2624 / FGSC A1156) protein is Dihydroxy-acid dehydratase astD, mitochondrial.